The sequence spans 294 residues: Tyrosine-protein phosphatase (294 aa).

The signal sequence occupies residues 1 to 24 (MKTHHANLALALMLGLSSSATAVA). Residue C182 is the Phosphocysteine intermediate of the active site. 2 stretches are compositionally biased toward basic and acidic residues: residues 221-231 (QPKDSDERADH) and 238-247 (PGDRPQDGGH). Positions 221-252 (QPKDSDERADHGAGQAEPGDRPQDGGHGRYRA) are disordered.

This sequence belongs to the protein-tyrosine phosphatase family. As to quaternary structure, monomer.

It carries out the reaction O-phospho-L-tyrosyl-[protein] + H2O = L-tyrosyl-[protein] + phosphate. This is Tyrosine-protein phosphatase (iphP) from Nostoc commune.